The following is a 136-amino-acid chain: Large ribosomal subunit protein uL16c (136 aa).

Residues 1 to 20 form a disordered region; that stretch reads MLSPKRTRFRKQHRGRMKGK.

Belongs to the universal ribosomal protein uL16 family. Part of the 50S ribosomal subunit.

The protein localises to the plastid. It localises to the chloroplast. The sequence is that of Large ribosomal subunit protein uL16c from Agrostis stolonifera (Creeping bentgrass).